The chain runs to 193 residues: Ribosomal RNA large subunit methyltransferase E (193 aa).

S-adenosyl-L-methionine contacts are provided by G49, F51, D69, D86, and D106. Catalysis depends on K146, which acts as the Proton acceptor.

Belongs to the class I-like SAM-binding methyltransferase superfamily. RNA methyltransferase RlmE family.

Its subcellular location is the cytoplasm. It catalyses the reaction uridine(2552) in 23S rRNA + S-adenosyl-L-methionine = 2'-O-methyluridine(2552) in 23S rRNA + S-adenosyl-L-homocysteine + H(+). In terms of biological role, specifically methylates the uridine in position 2552 of 23S rRNA at the 2'-O position of the ribose in the fully assembled 50S ribosomal subunit. This is Ribosomal RNA large subunit methyltransferase E from Brachyspira hyodysenteriae (strain ATCC 49526 / WA1).